Here is a 363-residue protein sequence, read N- to C-terminus: S-adenosylmethionine:tRNA ribosyltransferase-isomerase (363 aa).

The protein belongs to the QueA family. As to quaternary structure, monomer.

The protein localises to the cytoplasm. It catalyses the reaction 7-aminomethyl-7-carbaguanosine(34) in tRNA + S-adenosyl-L-methionine = epoxyqueuosine(34) in tRNA + adenine + L-methionine + 2 H(+). Its pathway is tRNA modification; tRNA-queuosine biosynthesis. Functionally, transfers and isomerizes the ribose moiety from AdoMet to the 7-aminomethyl group of 7-deazaguanine (preQ1-tRNA) to give epoxyqueuosine (oQ-tRNA). The protein is S-adenosylmethionine:tRNA ribosyltransferase-isomerase of Brucella melitensis biotype 2 (strain ATCC 23457).